The chain runs to 240 residues: EF-hand domain-containing protein D2 (240 aa).

The residue at position 2 (alanine 2) is an N-acetylalanine. Residue serine 11 is modified to Phosphoserine. The tract at residues 13–38 (RLQMEGEGGGETPEQPGLNGAAAAAA) is disordered. 2 positions are modified to phosphoserine: serine 74 and serine 76. Tyrosine 83 bears the Phosphotyrosine mark. EF-hand domains are found at residues 92 to 127 (KQIK…LGAP) and 128 to 163 (QTHL…AAAG). 8 residues coordinate Ca(2+): aspartate 105, aspartate 109, glutamate 116, aspartate 141, aspartate 143, aspartate 145, lysine 147, and glutamate 152. Lysine 233 carries the post-translational modification N6-acetyllysine.

In terms of assembly, interacts with CASP9; with inactive form. Found in lymphocytes; preferentially expressed in CD8+ cells.

It localises to the membrane raft. Functionally, may regulate B-cell receptor (BCR)-induced immature and primary B-cell apoptosis. Plays a role as negative regulator of the canonical NF-kappa-B-activating branch. Controls spontaneous apoptosis through the regulation of BCL2L1 abundance. This is EF-hand domain-containing protein D2 (EFHD2) from Homo sapiens (Human).